A 582-amino-acid chain; its full sequence is Membrane protein insertase YidC (582 aa).

A helical transmembrane segment spans residues 3-23; it reads IQRALVITGIAVVSYLMIQAW. The disordered stretch occupies residues 38–92; that stretch reads QVAEQGNSSSSDSADLPSVQSQTDNSIPSAQSDNDLPSVSPADIAQPTPSSQRIE. The span at 45–58 shows a compositional bias: low complexity; sequence SSSSDSADLPSVQS. The span at 59-74 shows a compositional bias: polar residues; the sequence is QTDNSIPSAQSDNDLP. 5 consecutive transmembrane segments (helical) span residues 357-377, 394-414, 464-484, 495-515, and 541-561; these read TVDY…LVFL, GVGN…AIFF, LGGC…YYVL, FFLW…PILM, and MPMI…LYWL.

Belongs to the OXA1/ALB3/YidC family. Type 1 subfamily. In terms of assembly, interacts with the Sec translocase complex via SecD. Specifically interacts with transmembrane segments of nascent integral membrane proteins during membrane integration.

The protein resides in the cell inner membrane. Required for the insertion and/or proper folding and/or complex formation of integral membrane proteins into the membrane. Involved in integration of membrane proteins that insert both dependently and independently of the Sec translocase complex, as well as at least some lipoproteins. Aids folding of multispanning membrane proteins. The sequence is that of Membrane protein insertase YidC from Alcanivorax borkumensis (strain ATCC 700651 / DSM 11573 / NCIMB 13689 / SK2).